We begin with the raw amino-acid sequence, 283 residues long: Glutamate racemase (283 aa).

Substrate contacts are provided by residues 28–29 (DS) and 60–61 (YG). Cysteine 92 (proton donor/acceptor) is an active-site residue. Position 93 to 94 (93 to 94 (NT)) interacts with substrate. The active-site Proton donor/acceptor is cysteine 204. A substrate-binding site is contributed by 205-206 (TH).

It belongs to the aspartate/glutamate racemases family.

It catalyses the reaction L-glutamate = D-glutamate. The protein operates within cell wall biogenesis; peptidoglycan biosynthesis. Functionally, provides the (R)-glutamate required for cell wall biosynthesis. The chain is Glutamate racemase from Salmonella gallinarum (strain 287/91 / NCTC 13346).